Here is a 206-residue protein sequence, read N- to C-terminus: Ribosomal RNA small subunit methyltransferase G (206 aa).

Residues Gly74, Leu79, 125-126 (VE), and Arg140 contribute to the S-adenosyl-L-methionine site.

The protein belongs to the methyltransferase superfamily. RNA methyltransferase RsmG family.

The protein resides in the cytoplasm. It catalyses the reaction guanosine(527) in 16S rRNA + S-adenosyl-L-methionine = N(7)-methylguanosine(527) in 16S rRNA + S-adenosyl-L-homocysteine. Specifically methylates the N7 position of guanine in position 527 of 16S rRNA. This Shewanella woodyi (strain ATCC 51908 / MS32) protein is Ribosomal RNA small subunit methyltransferase G.